Reading from the N-terminus, the 127-residue chain is Cyclin-dependent kinase 2-associated protein 2 (127 aa).

Residues 1–49 (MSYKPIAPAPSSTPGSSTPGPGTPVPTAGSVPSPSGSVPGAAGPFRPLF) are disordered. A compositionally biased stretch (low complexity) spans 9–44 (APSSTPGSSTPGPGTPVPTAGSVPSPSGSVPGAAGP). Residues 65 to 107 (PPGAQGSQSTYTDLLSVIEEMGKEIRPTYAGSKSAMERLKRGI) form an interaction with CDK2 region.

This sequence belongs to the CDK2AP family. Component of the nucleosome remodeling and deacetylase (NuRD) repressor complex, composed of core proteins MTA1, MTA2, MTA3, RBBP4, RBBP7, HDAC1, HDAC2, MBD2, MBD3, and peripherally associated proteins CDK2AP1, CDK2AP2, GATAD2A, GATAD2B, CHD3, CHD4 and CHD5. The exact stoichiometry of the NuRD complex is unknown, and some subunits such as MBD2 and MBD3, GATAD2A and GATAD2B, and CHD3, CHD4 and CHD5 define mutually exclusive NuRD complexes. Interacts with CDK2AP1. Interacts with CDK2. Interacts with MAPK1. Post-translationally, phosphorylated by MAPK1 and CDK2.

It is found in the cytoplasm. The protein localises to the nucleus. Functionally, acts as a component of the histone deacetylase NuRD complex which participates in the remodeling of chromatin. Inhibits cell cycle G1/S phase transition by repressing CDK2 expression and activation; represses CDK2 activation by inhibiting its interaction with cyclin E and A. Plays a role in regulating the self-renewal of embryonic stem cells (ESCs) and in maintaining cell survival during terminal differentiation of ESCs. Regulates microtubule organization of metaphase II oocytes. The polypeptide is Cyclin-dependent kinase 2-associated protein 2 (CDK2AP2) (Bos taurus (Bovine)).